Here is a 295-residue protein sequence, read N- to C-terminus: Cytidine deaminase (295 aa).

CMP/dCMP-type deaminase domains follow at residues 48-168 (SDKE…FGPA) and 187-295 (DDKD…FVNV). 89 to 91 (NME) contacts substrate. Residue H102 participates in Zn(2+) binding. E104 functions as the Proton donor in the catalytic mechanism. Zn(2+) contacts are provided by C129 and C132.

This sequence belongs to the cytidine and deoxycytidylate deaminase family. Homodimer. Requires Zn(2+) as cofactor.

It catalyses the reaction cytidine + H2O + H(+) = uridine + NH4(+). The enzyme catalyses 2'-deoxycytidine + H2O + H(+) = 2'-deoxyuridine + NH4(+). This enzyme scavenges exogenous and endogenous cytidine and 2'-deoxycytidine for UMP synthesis. The polypeptide is Cytidine deaminase (Vibrio parahaemolyticus serotype O3:K6 (strain RIMD 2210633)).